Consider the following 570-residue polypeptide: MSEKHPGPLVVEGKLSDAERMKLESNYLRGTIAEDLNDGLTGGFKGDNFLLIRFHGMYQQDDRDIRAERAAQKLEPRHAMLLRCRLPGGVITTTQWQAIDKFAADNTIYGSIRLTNRQTFQFHGILKKNVKPVHQMLHSVGLDALATANDMNRNVLCTSNPYESQLHAEAYEWAKKISEHLLPRTRAYAEIWLDQEKVATTDEEPILGQTYLPRKFKTTVVIPPQNDIDLHANDMNFVAIAENGKLVGFNLLVGGGLSIEHGNKKTYARTASEFGYLPLEHTLAVAEAVVTTQRDWGNRTDRKNAKTKYTLERVGLETFKAEVERRAGIKFEPIRPYEFTGRGDRIGWVKGIDNNWHLTLFIENGRILDYPGRPLKTGLLEIAKIHQGEFRITANQNLIIASVPESQKVKIETLARDHGLMNAVSAQRENSMACVSFPTCPLAMAEAERFLPSFTDKVEAILEKHGIPDEHIVMRVTGCPNGCGRAMLAEIGLVGKAPGRYNLHLGGNRIGTRIPRMYKENITESDILASLDELVGRWAKEREAGEGFGDFTVRAGIIRPVLDPARDFWE.

Cys434, Cys440, Cys479, and Cys483 together coordinate [4Fe-4S] cluster. Cys483 is a binding site for siroheme.

The protein belongs to the nitrite and sulfite reductase 4Fe-4S domain family. Alpha(8)-beta(8). The alpha component is a flavoprotein, the beta component is a hemoprotein. Requires siroheme as cofactor. [4Fe-4S] cluster serves as cofactor.

The catalysed reaction is hydrogen sulfide + 3 NADP(+) + 3 H2O = sulfite + 3 NADPH + 4 H(+). It functions in the pathway sulfur metabolism; hydrogen sulfide biosynthesis; hydrogen sulfide from sulfite (NADPH route): step 1/1. Functionally, component of the sulfite reductase complex that catalyzes the 6-electron reduction of sulfite to sulfide. This is one of several activities required for the biosynthesis of L-cysteine from sulfate. This is Sulfite reductase [NADPH] hemoprotein beta-component from Salmonella schwarzengrund (strain CVM19633).